We begin with the raw amino-acid sequence, 1376 residues long: DNA-directed RNA polymerase subunit beta'' (1376 aa).

Zn(2+) contacts are provided by Cys221, Cys290, Cys297, and Cys300. The tract at residues 895–919 (PSGSGFPSDNELDHSNRNPFSSSYP) is disordered.

This sequence belongs to the RNA polymerase beta' chain family. RpoC2 subfamily. In plastids the minimal PEP RNA polymerase catalytic core is composed of four subunits: alpha, beta, beta', and beta''. When a (nuclear-encoded) sigma factor is associated with the core the holoenzyme is formed, which can initiate transcription. It depends on Zn(2+) as a cofactor.

The protein resides in the plastid. The protein localises to the chloroplast. The enzyme catalyses RNA(n) + a ribonucleoside 5'-triphosphate = RNA(n+1) + diphosphate. In terms of biological role, DNA-dependent RNA polymerase catalyzes the transcription of DNA into RNA using the four ribonucleoside triphosphates as substrates. The protein is DNA-directed RNA polymerase subunit beta'' of Pelargonium hortorum (Common geranium).